A 901-amino-acid polypeptide reads, in one-letter code: Probable inorganic carbon transporter subunit DabA (901 aa).

Zn(2+) is bound by residues cysteine 424, aspartate 426, histidine 606, and cysteine 621.

It belongs to the inorganic carbon transporter (TC 9.A.2) DabA family. As to quaternary structure, forms a complex with DabB. Requires Zn(2+) as cofactor.

The protein localises to the cell membrane. Part of an energy-coupled inorganic carbon pump. In Staphylococcus aureus (strain NCTC 8325 / PS 47), this protein is Probable inorganic carbon transporter subunit DabA.